We begin with the raw amino-acid sequence, 1456 residues long: Ig-like and fibronectin type-III domain-containing protein C27B7.7 (1456 aa).

An N-terminal signal peptide occupies residues 1 to 16 (MISLSLVLLLLFGVRC). Fibronectin type-III domains lie at 24-128 (NDDS…SINT) and 132-227 (IPKA…TNST). Residues asparagine 64, asparagine 146, asparagine 164, asparagine 198, and asparagine 225 are each glycosylated (N-linked (GlcNAc...) asparagine). The 87-residue stretch at 236–322 (PDEEYTADPQ…DAGDSSKEVN (87 aa)) folds into the Ig-like 1 domain. Cysteines 254 and 308 form a disulfide. In terms of domain architecture, Fibronectin type-III 3 spans 328–426 (PGSPPSEITL…VAMERDTQPI (99 aa)). Asparagine 471, asparagine 497, and asparagine 517 each carry an N-linked (GlcNAc...) asparagine glycan. Fibronectin type-III domains lie at 531–631 (APTQ…TLNG), 636–736 (PPDN…TAYS), and 737–846 (EVPI…WFRT). Asparagine 658, asparagine 691, and asparagine 692 each carry an N-linked (GlcNAc...) asparagine glycan. Residues 841–948 (PRWFRTGHGK…GSSSASVEIR (108 aa)) form the Ig-like 2 domain. Residues cysteine 877 and cysteine 932 are joined by a disulfide bond. Asparagine 893, asparagine 898, asparagine 969, asparagine 1091, asparagine 1120, asparagine 1133, asparagine 1151, asparagine 1207, asparagine 1268, asparagine 1277, asparagine 1298, asparagine 1350, asparagine 1357, and asparagine 1382 each carry an N-linked (GlcNAc...) asparagine glycan. Residues 955–1050 (PPENIILTAY…SCISDVLYET (96 aa)) enclose the Fibronectin type-III 7 domain. Fibronectin type-III domains follow at residues 1148–1234 (APTN…TPNG), 1236–1343 (PKTA…ISFD), and 1347–1438 (VIDN…SSPS). Residues 1419-1456 (LGRESPPSEEIDLEFISSPSPTPIISGSRRKVIKEPPL) are disordered. Positions 1434-1445 (ISSPSPTPIISG) are enriched in low complexity.

Its subcellular location is the secreted. This is Ig-like and fibronectin type-III domain-containing protein C27B7.7 from Caenorhabditis elegans.